The primary structure comprises 186 residues: Imidazoleglycerol-phosphate dehydratase (186 aa).

It belongs to the imidazoleglycerol-phosphate dehydratase family.

It localises to the cytoplasm. The enzyme catalyses D-erythro-1-(imidazol-4-yl)glycerol 3-phosphate = 3-(imidazol-4-yl)-2-oxopropyl phosphate + H2O. It participates in amino-acid biosynthesis; L-histidine biosynthesis; L-histidine from 5-phospho-alpha-D-ribose 1-diphosphate: step 6/9. The chain is Imidazoleglycerol-phosphate dehydratase from Dictyoglomus turgidum (strain DSM 6724 / Z-1310).